The chain runs to 313 residues: Potassium channel subfamily K member 6 (313 aa).

Topologically, residues 1 to 4 are cytoplasmic; sequence MRRG. A helical transmembrane segment spans residues 5–25; it reads ALLAGALAAYAAYLVLGALLV. Residues asparagine 79 and asparagine 85 are each glycosylated (N-linked (GlcNAc...) asparagine). An intramembrane region (pore-forming) is located at residues 90 to 115; that stretch reads AWDFASALFFASTLITTVGYGYTTPL. The K(+) site is built by threonine 106, valine 107, glycine 108, and tyrosine 109. The tract at residues 106-111 is selectivity filter 1; the sequence is TVGYGY. The helical transmembrane segment at 121-141 threads the bilayer; sequence AFSIAFALLGVPTTMLLLTAS. At 142–172 the chain is on the cytoplasmic side; sequence AQRLSLLLTHVPLSWLSMRWGWDPRRAACWH. The helical transmembrane segment at 173–193 threads the bilayer; the sequence is LVALLGVVVTVCFLVPAVIFA. Residues 199 to 223 constitute an intramembrane region (pore-forming); the sequence is WSFLDAFYFCFISLSTIGLGDYVPG. Threonine 214, isoleucine 215, and glycine 216 together coordinate K(+). The tract at residues 214–219 is selectivity filter 2; it reads TIGLGD. A helical transmembrane segment spans residues 236 to 256; it reads VLVTVYLFLGLVAMVLVLQTF. Over 257–313 the chain is Cytoplasmic; that stretch reads RHVSDLHGLTELILLPPPCPASFNADEDDRVDILGPQPESHQQLSASSHTDYASIPR. Residues 282–290 carry the Lysosomal targeting signal motif; sequence DEDDRVDIL. The interval 288–313 is disordered; sequence DILGPQPESHQQLSASSHTDYASIPR. Residues 295–307 are compositionally biased toward polar residues; it reads ESHQQLSASSHTD. The Lysosomal targeting signal motif lies at 308–312; that stretch reads YASIP.

It belongs to the two pore domain potassium channel (TC 1.A.1.8) family. As to quaternary structure, homodimer; disulfide-linked. In terms of processing, N-glycosylation is necessary for targeting to lysosomes. In terms of tissue distribution, widespread expression, detected in all tissues tested except for skeletal muscle. Strongest expression in placenta, pancreas, heart, colon and spleen, lower levels detected in peripheral blood leukocytes, lung, liver, kidney and thymus. Lowest expression detected in brain.

The protein resides in the late endosome membrane. It is found in the lysosome membrane. It catalyses the reaction K(+)(in) = K(+)(out). Functionally, k(+) channel that conducts outward rectifying currents at the membranes of the endolysosomal system. Active in lysosomes where it regulates lysosome numbers and size. In macrophages, enables K(+) efflux coupled to ATP-induced NLRP3 inflammasome activation upon bacterial infection. Cooperates with ATP-gated P2RX7 channels to activate NLRP3 inflammasome, with P2RX7 conducting Ca(2+) and Na(+) influx that sets the membrane potential for K(+) efflux. Does not display channel activity. In Homo sapiens (Human), this protein is Potassium channel subfamily K member 6.